The chain runs to 209 residues: Molybdenum cofactor guanylyltransferase (209 aa).

GTP-binding positions include 13–15 (LAG), lysine 26, asparagine 54, aspartate 74, and aspartate 104. Position 104 (aspartate 104) interacts with Mg(2+).

It belongs to the MobA family. As to quaternary structure, monomer. Requires Mg(2+) as cofactor.

It localises to the cytoplasm. The catalysed reaction is Mo-molybdopterin + GTP + H(+) = Mo-molybdopterin guanine dinucleotide + diphosphate. Functionally, transfers a GMP moiety from GTP to Mo-molybdopterin (Mo-MPT) cofactor (Moco or molybdenum cofactor) to form Mo-molybdopterin guanine dinucleotide (Mo-MGD) cofactor. The polypeptide is Molybdenum cofactor guanylyltransferase (Acinetobacter baumannii (strain ATCC 17978 / DSM 105126 / CIP 53.77 / LMG 1025 / NCDC KC755 / 5377)).